The chain runs to 325 residues: 2-oxoglutarate-dependent dioxygenase tropC (325 aa).

In terms of domain architecture, Fe2OG dioxygenase spans 185–287 (PSIPMRLLHY…RYSVAFFLNG (103 aa)). Fe cation is bound by residues histidine 210, aspartate 212, and histidine 269. Arginine 278 is a binding site for 2-oxoglutarate.

This sequence belongs to the iron/ascorbate-dependent oxidoreductase family. Fe(2+) is required as a cofactor.

The protein operates within secondary metabolite biosynthesis. 2-oxoglutarate-dependent dioxygenase; part of the gene cluster that mediates the biosynthesis of the tropolone class of fungal maleic anhydrides. The pathway begins with the synthesis of 3-methylorcinaldehyde by the non-reducing polyketide synthase (PKS) tropA. 3-methylorcinaldehyde is the substrate for the FAD-dependent monooxygenase tropB to yield a dearomatized hydroxycyclohexadione. The 2-oxoglutarate-dependent dioxygenase tropC then performs the oxidative ring expansion to provide the first tropolone metabolite stipitaldehyde. Trop D converts stipitaldehyde into stipitacetal which is in turn converted to stipitalide by the short-chain dehydrogenase/reductase tropE. The next steps involve tropF, tropG, tropH, tropI and tropJ to form successive tropolone maleic anhydrides including stipitaldehydic, stipitatonic and stipitatic acids. The protein is 2-oxoglutarate-dependent dioxygenase tropC of Talaromyces stipitatus (strain ATCC 10500 / CBS 375.48 / QM 6759 / NRRL 1006) (Penicillium stipitatum).